The primary structure comprises 429 residues: Lysophosphatidic acid phosphatase type 6 (429 aa).

Residues 1–32 (MISRVFKLRMWAPVGVLTSLTYCLHQRRVALA) constitute a mitochondrion transit peptide. The segment at 58–169 (RHGARSPLKP…VFIRSTNIYR (112 aa)) is substrate binding. His-59 acts as the Nucleophile in catalysis. Asp-336 acts as the Proton donor in catalysis.

Belongs to the histidine acid phosphatase family. Monomer. Detected in brain (at protein level).

The protein localises to the mitochondrion. The catalysed reaction is a phosphate monoester + H2O = an alcohol + phosphate. The enzyme catalyses 1-(9Z-octadecenoyl)-sn-glycero-3-phosphate + H2O = 1-(9Z-octadecenoyl)-sn-glycerol + phosphate. Functionally, hydrolyzes lysophosphatidic acid (LPA) containing a medium length fatty acid chain to the corresponding monoacylglycerol. Has highest activity with lysophosphatidic acid containing myristate (C14:0), monounsaturated oleate (C18:1) or palmitate (C16:0), and lower activity with C18:0 and C6:0 lysophosphatidic acid. This Bos taurus (Bovine) protein is Lysophosphatidic acid phosphatase type 6 (ACP6).